A 366-amino-acid chain; its full sequence is G-protein coupled receptor 183-B (366 aa).

Residues 1–24 (MMSPDLDLNFSSNCNLYDHRPVAR) are Extracellular-facing. Residue N9 is glycosylated (N-linked (GlcNAc...) asparagine). A helical transmembrane segment spans residues 25–50 (VLIPLVYSIICPVGLLGNALALHVVI). The Cytoplasmic portion of the chain corresponds to 51 to 70 (SSTTKINSITLYSANLAVSD). Residues 71–88 (ILFCLSLPLRAVYYGLGF) traverse the membrane as a helical segment. Residues 89-98 (HWPMGEVLCK) are Extracellular-facing. An intrachain disulfide couples C97 to C175. The helical transmembrane segment at 99-120 (AIALLFYLNCYAGVNFMTCLAV) threads the bilayer. At 121–142 (DRFVALVFPARLAKLRKAKNVR) the chain is on the cytoplasmic side. Residues 143–161 (FVCLAIWLLVLAQTLPLLT) form a helical membrane-spanning segment. Residues 162 to 187 (IGLTKTEPDSSITCMEYPNFEGVFKG) lie on the Extracellular side of the membrane. The helical transmembrane segment at 188-210 (LPYMLIVAVVLGFGIPVMTIIAC) threads the bilayer. The Cytoplasmic portion of the chain corresponds to 211–236 (YSILTHKLHQAAKSNQLTERSGKTKK). Residues 237–260 (ARGVIAGVVFVFVVCFSPYHIDIL) form a helical membrane-spanning segment. Topologically, residues 261–280 (QYMIRKLLYETDCKELQSFQ) are extracellular. Residues 281–305 (ISLHITVCLMNLNSCLDPFVYFFAC) traverse the membrane as a helical segment. The Cytoplasmic portion of the chain corresponds to 306–366 (KGYKQKVMRM…QQICYQPSAT (61 aa)).

It belongs to the G-protein coupled receptor 1 family.

The protein resides in the cell membrane. Probable receptor for oxysterols that plays a central role during humoral immunity. Promotes activated B-cell localization in the outer follicle and interfollicular regions. This chain is G-protein coupled receptor 183-B (gpr183b), found in Danio rerio (Zebrafish).